We begin with the raw amino-acid sequence, 276 residues long: Transmembrane protein 53 (276 aa).

A helical transmembrane segment spans residues 170 to 190 (LLLLAAFALVVILFHFLLAPF).

It belongs to the TMEM53 family. Expressed in liver (at protein level).

The protein localises to the nucleus outer membrane. Its function is as follows. Negatively regulates bone morphogenetic protein (BMP) signaling in osteoblast lineage cells by blocking cytoplasm-nucleus translocation of phosphorylated SMAD1/5/9 proteins. The polypeptide is Transmembrane protein 53 (Tmem53) (Mus musculus (Mouse)).